A 493-amino-acid polypeptide reads, in one-letter code: Glycerol kinase (493 aa).

Threonine 13 serves as a coordination point for ADP. 3 residues coordinate ATP: threonine 13, threonine 14, and serine 15. Residue threonine 13 coordinates sn-glycerol 3-phosphate. Arginine 17 lines the ADP pocket. The sn-glycerol 3-phosphate site is built by arginine 83, glutamate 84, tyrosine 135, and aspartate 244. 5 residues coordinate glycerol: arginine 83, glutamate 84, tyrosine 135, aspartate 244, and glutamine 245. Residues threonine 266 and glycine 309 each contribute to the ADP site. ATP is bound by residues threonine 266, glycine 309, glutamine 313, and glycine 410. Glycine 410 and asparagine 414 together coordinate ADP.

This sequence belongs to the FGGY kinase family.

It carries out the reaction glycerol + ATP = sn-glycerol 3-phosphate + ADP + H(+). It participates in polyol metabolism; glycerol degradation via glycerol kinase pathway; sn-glycerol 3-phosphate from glycerol: step 1/1. Inhibited by fructose 1,6-bisphosphate (FBP). Key enzyme in the regulation of glycerol uptake and metabolism. Catalyzes the phosphorylation of glycerol to yield sn-glycerol 3-phosphate. The chain is Glycerol kinase from Shewanella piezotolerans (strain WP3 / JCM 13877).